The sequence spans 383 residues: L-lactate dehydrogenase (383 aa).

Positions 1–380 (MIVSSTTDFR…NETILAERVP (380 aa)) constitute an FMN hydroxy acid dehydrogenase domain. Tyr24 contacts substrate. The FMN site is built by Ser106 and Gln127. Substrate is bound at residue Tyr129. Thr155 serves as a coordination point for FMN. Arg164 lines the substrate pocket. Lys251 serves as a coordination point for FMN. His275 functions as the Proton acceptor in the catalytic mechanism. Position 278 (Arg278) interacts with substrate. 306–330 (DGGVRSGLDVVRMLALGARGVLIGR) contributes to the FMN binding site.

It belongs to the FMN-dependent alpha-hydroxy acid dehydrogenase family. Requires FMN as cofactor.

The protein resides in the cell inner membrane. It carries out the reaction (S)-lactate + A = pyruvate + AH2. Its function is as follows. Catalyzes the conversion of L-lactate to pyruvate. Is coupled to the respiratory chain. The polypeptide is L-lactate dehydrogenase (Caulobacter vibrioides (strain ATCC 19089 / CIP 103742 / CB 15) (Caulobacter crescentus)).